The primary structure comprises 355 residues: MNATITTSEQARPVFPFTAIVGQEEMKLALLLNVIDPKIGGVMIMGDRGTGKSTTVRALVDLLPEIEVVENDPFNSHPYDPELMSDEVREKVHRGESIRTTTTKIPMVDLPLGATEDRVCGTIDIEKALTEGVKAFEPGLLAKANRGILYVDEVNLLDDHLVDVLLDSAASGWNTVEREGISICHPARFILVGSGNPEEGELRPQLLDRFGMHAQIGTVREPELRVKIVEQRATFDENPKEFRQSYETSQASLTSQLTEARARLRQVQTDYSLRVKISQVCSELNVDGLRGDIVTNRAAKALAALEGRTSVSVEDIGRIITLCLRHRLRKDPLESIDSGEKVQEVFSIVFGTNPL.

An ATP-binding site is contributed by 46-53; sequence GDRGTGKS. Cys-281 and Cys-323 are joined by a disulfide.

Belongs to the Mg-chelatase subunits D/I family. As to quaternary structure, the magnesium chelatase complex is a heterotrimer consisting of subunits CHLI, CHLD and CHLH.

Its subcellular location is the plastid. The protein resides in the chloroplast. The catalysed reaction is protoporphyrin IX + Mg(2+) + ATP + H2O = Mg-protoporphyrin IX + ADP + phosphate + 3 H(+). It functions in the pathway porphyrin-containing compound metabolism; chlorophyll biosynthesis. Its activity is regulated as follows. Redox regulation; active in reducing conditions, inactive in oxidizing conditions. Thioredoxins f and m mediate the reversible reductive activation of oxidized CHLI. In terms of biological role, involved in chlorophyll biosynthesis. Catalyzes the insertion of magnesium ion into protoporphyrin IX to yield Mg-protoporphyrin IX. The magnesium-chelatase is a complex of three subunits, CHLI, CHLD and CHLH. The reaction takes place in two steps, with an ATP-dependent activation followed by an ATP-dependent chelation step. In Nephroselmis olivacea (Green alga), this protein is Magnesium-chelatase subunit ChlI (chlI).